We begin with the raw amino-acid sequence, 276 residues long: Ribosomal RNA small subunit methyltransferase I (276 aa).

This sequence belongs to the methyltransferase superfamily. RsmI family.

The protein localises to the cytoplasm. The catalysed reaction is cytidine(1402) in 16S rRNA + S-adenosyl-L-methionine = 2'-O-methylcytidine(1402) in 16S rRNA + S-adenosyl-L-homocysteine + H(+). In terms of biological role, catalyzes the 2'-O-methylation of the ribose of cytidine 1402 (C1402) in 16S rRNA. This is Ribosomal RNA small subunit methyltransferase I from Mycoplasma pneumoniae (strain ATCC 29342 / M129 / Subtype 1) (Mycoplasmoides pneumoniae).